The following is a 163-amino-acid chain: uncharacterized protein (163 aa).

The disordered stretch occupies residues 142–163; that stretch reads PQIVISEHNNTKETSPSRQFEH. Over residues 153-163 the composition is skewed to polar residues; sequence KETSPSRQFEH.

It belongs to the RCAN family.

In terms of biological role, inhibits calcineurin-dependent transcriptional responses by binding to the catalytic domain of calcineurin. This is an uncharacterized protein from Schizosaccharomyces pombe (strain 972 / ATCC 24843) (Fission yeast).